The chain runs to 235 residues: Putative cobalt transport protein CbiM 2 (235 aa).

7 consecutive transmembrane segments (helical) span residues 9–29 (PAGW…MGII), 41–61 (YLPL…LKLP), 80–100 (FGYC…ALLL), 107–127 (TMGA…YAVY), 135–155 (INIY…TYII), 160–180 (LALA…AFFS), and 181–201 (IFAI…ALVF).

The protein belongs to the CbiM family. As to quaternary structure, forms an energy-coupling factor (ECF) transporter complex composed of an ATP-binding protein (A component, CbiO), a transmembrane protein (T component, CbiQ) and 2 possible substrate-capture proteins (S components, CbiM and CbiN) of unknown stoichimetry.

The protein localises to the cell membrane. It participates in cofactor biosynthesis; adenosylcobalamin biosynthesis. Functionally, part of the energy-coupling factor (ECF) transporter complex CbiMNOQ involved in cobalt import. The sequence is that of Putative cobalt transport protein CbiM 2 from Methanosphaerula palustris (strain ATCC BAA-1556 / DSM 19958 / E1-9c).